A 125-amino-acid polypeptide reads, in one-letter code: uncharacterized protein (125 aa).

To transposase of insertion sequence IS6501.

This is an uncharacterized protein from Sinorhizobium fredii (strain NBRC 101917 / NGR234).